A 797-amino-acid polypeptide reads, in one-letter code: Interphotoreceptor matrix proteoglycan 1 (797 aa).

A signal peptide spans 1-20; sequence MYLETRRAIFVFWIFLQVQG. 4 N-linked (GlcNAc...) asparagine glycosylation sites follow: Asn42, Asn143, Asn191, and Asn215. Residues 232 to 354 enclose the SEA 1 domain; sequence EEQRVELSVS…QPEIYLTATD (123 aa). O-linked (GalNAc...) threonine glycans are attached at residues Thr403, Thr421, Thr432, and Thr442. In terms of domain architecture, SEA 2 spans 571–684; sequence RELVVFFSLR…YSLNIEPADQ (114 aa). Residues Asn592 and Asn616 are each glycosylated (N-linked (GlcNAc...) asparagine). Positions 621-629 match the Heparin- and hyaluronan-binding motif; that stretch reads KQLEILNFR. Asn630 and Asn648 each carry an N-linked (GlcNAc...) asparagine glycan.

In terms of processing, the N-terminus is blocked. Highly glycosylated (N- and O-linked carbohydrates and sialic acid). As to expression, expressed in the retina (at protein level). In the retina, specifically expressed by cone and rod photoreceptor cells. Localizes to cone and rod photoreceptor cells surrounding the interphotoreceptor matrix of the retina.

The protein localises to the cell projection. It localises to the cilium. Its subcellular location is the photoreceptor outer segment. The protein resides in the secreted. It is found in the extracellular space. The protein localises to the extracellular matrix. It localises to the interphotoreceptor matrix. Its subcellular location is the photoreceptor inner segment. In terms of biological role, chondroitin sulfate-, heparin- and hyaluronan-binding protein. May serve to form a basic macromolecular scaffold comprising the insoluble interphotoreceptor matrix. In Homo sapiens (Human), this protein is Interphotoreceptor matrix proteoglycan 1.